A 603-amino-acid polypeptide reads, in one-letter code: MSCGNEFVETLKKIGYPKADNLNGEDFDWLFEGVEDESFLKWFCGNVNEQNVLSERELEAFSILQKSGKPILEGAALDEALKTCKTSDLKTPRLDDKELEKLEDEVQTLLKLKNLKIQRRNKCQLMASVTSHKSLRLNAKEEEATKKLKQSQGILNAMITKISNELQALTDEVTQLMMFFRHSNLGQGTNPLVFLSQFSLEKYLSQEEQSTAALTLYTKKQFFQGIHEVVESSNEDNFQLLDIQTPSICDNQEILEERRLEMARLQLAYICAQHQLIHLKASNSSMKSSIKWAEESLHSLTSKAVDKENLDAKISSLTSEIMKLEKEVTQIKDRSLPAVVRENAQLLNMPVVKGDFDLQIAKQDYYTARQELVLNQLIKQKASFELLQLSYEIELRKHRDIYRQLENLVQELSQSNMMLYKQLEMLTDPSVSQQINPRNTIDTKDYSTHRLYQVLEGENKKKELFLTHGNLEEVAEKLKQNISLVQDQLAVSAQEHSFFLSKRNKDVDMLCDTLYQGGNQLLLSDQELTEQFHKVESQLNKLNHLLTDILADVKTKRKTLANNKLHQMEREFYVYFLKDEDYLKDIVENLETQSKIKAVSLED.

An N-acetylserine modification is found at Ser2. Coiled coils occupy residues Arg93–Met177, Val305–Leu336, Leu389–Leu426, and Glu458–Glu495.

The protein belongs to the HAUS3 family. As to quaternary structure, component of the HAUS augmin-like complex. The complex interacts with the gamma-tubulin ring complex and this interaction is required for spindle assembly. Interacts with EML3 (phosphorylated at 'Thr-881').

It localises to the cytoplasm. The protein localises to the cytoskeleton. It is found in the microtubule organizing center. Its subcellular location is the centrosome. The protein resides in the spindle. Contributes to mitotic spindle assembly, maintenance of centrosome integrity and completion of cytokinesis as part of the HAUS augmin-like complex. This is HAUS augmin-like complex subunit 3 (HAUS3) from Homo sapiens (Human).